The following is a 64-amino-acid chain: Translation machinery-associated protein 7 homolog (64 aa).

A disordered region spans residues 1–64; that stretch reads MSGRQGGKAK…GGGIKKSGKK (64 aa). Positions 21–50 form a coiled coil; it reads DLSEEDVEFKKKQQEEAKKIKEMAAKAGQR. A compositionally biased stretch (basic and acidic residues) spans 28-44; that stretch reads EFKKKQQEEAKKIKEMA. Positions 53–64 are enriched in gly residues; it reads LLGGGIKKSGKK.

This sequence belongs to the TMA7 family.

In Caenorhabditis briggsae, this protein is Translation machinery-associated protein 7 homolog.